A 127-amino-acid chain; its full sequence is Large ribosomal subunit protein uL24B (127 aa).

Belongs to the universal ribosomal protein uL24 family. Component of the large ribosomal subunit (LSU). Mature yeast ribosomes consist of a small (40S) and a large (60S) subunit. The 40S small subunit contains 1 molecule of ribosomal RNA (18S rRNA) and 33 different proteins (encoded by 57 genes). The large 60S subunit contains 3 rRNA molecules (25S, 5.8S and 5S rRNA) and 46 different proteins (encoded by 81 genes).

It localises to the cytoplasm. Its function is as follows. Component of the ribosome, a large ribonucleoprotein complex responsible for the synthesis of proteins in the cell. The small ribosomal subunit (SSU) binds messenger RNAs (mRNAs) and translates the encoded message by selecting cognate aminoacyl-transfer RNA (tRNA) molecules. The large subunit (LSU) contains the ribosomal catalytic site termed the peptidyl transferase center (PTC), which catalyzes the formation of peptide bonds, thereby polymerizing the amino acids delivered by tRNAs into a polypeptide chain. The nascent polypeptides leave the ribosome through a tunnel in the LSU and interact with protein factors that function in enzymatic processing, targeting, and the membrane insertion of nascent chains at the exit of the ribosomal tunnel. The sequence is that of Large ribosomal subunit protein uL24B from Saccharomyces cerevisiae (strain ATCC 204508 / S288c) (Baker's yeast).